The following is a 137-amino-acid chain: Nucleoside diphosphate kinase (137 aa).

Positions 9, 57, 85, 91, 102, and 112 each coordinate ATP. Catalysis depends on His-115, which acts as the Pros-phosphohistidine intermediate.

The protein belongs to the NDK family. Homotetramer. Requires Mg(2+) as cofactor.

Its subcellular location is the cytoplasm. It catalyses the reaction a 2'-deoxyribonucleoside 5'-diphosphate + ATP = a 2'-deoxyribonucleoside 5'-triphosphate + ADP. It carries out the reaction a ribonucleoside 5'-diphosphate + ATP = a ribonucleoside 5'-triphosphate + ADP. Its function is as follows. Major role in the synthesis of nucleoside triphosphates other than ATP. The ATP gamma phosphate is transferred to the NDP beta phosphate via a ping-pong mechanism, using a phosphorylated active-site intermediate. In Geotalea uraniireducens (strain Rf4) (Geobacter uraniireducens), this protein is Nucleoside diphosphate kinase.